Here is a 224-residue protein sequence, read N- to C-terminus: Attacin-A (224 aa).

An N-terminal signal peptide occupies residues 1 to 20 (MQKTSILIVALVALFAITEA). A propeptide spanning residues 21–34 (LPSLPTTGPIRVRR) is cleaved from the precursor.

The protein belongs to the attacin/sarcotoxin-2 family. Hemolymph (at protein level).

It localises to the secreted. Hemolymph antibacterial protein. The sequence is that of Attacin-A (AttA) from Drosophila melanogaster (Fruit fly).